Consider the following 365-residue polypeptide: tRNA-specific 2-thiouridylase MnmA (365 aa).

ATP contacts are provided by residues 14-21 (AMSGGVDS) and Leu-40. Cys-108 (nucleophile) is an active-site residue. A disulfide bridge links Cys-108 with Cys-204. Gly-132 lines the ATP pocket. The interval 154–156 (KDQ) is interaction with tRNA. Catalysis depends on Cys-204, which acts as the Cysteine persulfide intermediate.

It belongs to the MnmA/TRMU family.

It is found in the cytoplasm. It catalyses the reaction S-sulfanyl-L-cysteinyl-[protein] + uridine(34) in tRNA + AH2 + ATP = 2-thiouridine(34) in tRNA + L-cysteinyl-[protein] + A + AMP + diphosphate + H(+). Functionally, catalyzes the 2-thiolation of uridine at the wobble position (U34) of tRNA, leading to the formation of s(2)U34. This is tRNA-specific 2-thiouridylase MnmA from Rickettsia massiliae (strain Mtu5).